The sequence spans 291 residues: Oxidative stress-responsive serine-rich protein 1 (291 aa).

The interval 48 to 174 (EDAKPKSACA…SSDAPQVSQA (127 aa)) is disordered. Positions 65-83 (STRKSSRGAVRTQRRRRSK) are enriched in basic residues. Polar residues predominate over residues 132–142 (ECSSSLDTNHT). Residues T142 and T232 each carry the phosphothreonine modification.

This is Oxidative stress-responsive serine-rich protein 1 (OSER1) from Bos taurus (Bovine).